We begin with the raw amino-acid sequence, 257 residues long: MKFFVDLNSDIGEGYGAYKLGMDEEIMKCVTSVNCACGWHAGDPLIMDKTIKIAKENNVAVGAHPGYPDLLGFGRRKMVVTPDEARAYMLYQLGALNAFAKANETKLQHMKLHGAFYNMAAVEKDLADAVLDGIEQFDKDIIVMTLSGSYMAKEGKRRGLKVAEEVFADRGYNPDGTLVNRNLPGAFVKEPDEAIARVIKMIKTKKVTAVNGEEIDIAADSICVHGDNPKAIEFVDRIRKSLIADGIEVKSLYEFIK.

This sequence belongs to the LamB/PxpA family. Forms a complex composed of PxpA, PxpB and PxpC.

It catalyses the reaction 5-oxo-L-proline + ATP + 2 H2O = L-glutamate + ADP + phosphate + H(+). Its function is as follows. Catalyzes the cleavage of 5-oxoproline to form L-glutamate coupled to the hydrolysis of ATP to ADP and inorganic phosphate. The protein is 5-oxoprolinase subunit A of Fusobacterium nucleatum subsp. nucleatum (strain ATCC 25586 / DSM 15643 / BCRC 10681 / CIP 101130 / JCM 8532 / KCTC 2640 / LMG 13131 / VPI 4355).